A 279-amino-acid chain; its full sequence is MMDIIREMIRADVGFEDITTEALIDRGTRVVADIVSREEGVVAGVEVAEMMAREFSISIIRWKDDGDPLSGGERVLTLEGDAMDILMVERTMLNLMMKMSGIATLTRSMLQRARAVNEGIRIAATRKTTPGLQWFEKQAVRIGGGDTHRFRLDDCAMIKDNHIAIVGNIEDAVRRVRDHVSFTKKVEVEVESPDDAVRAAEAGADIVLLDNMSPETIRNTLEELERRGLRDNVIVEASGGIKPDNIELYASTGVEVISMGFITASAHPVDLSLEIRGLK.

Substrate-binding positions include arginine 90, 125–127 (TRK), arginine 149, lysine 159, glutamate 189, aspartate 210, 238–240 (SGG), and 259–261 (MGF).

The protein belongs to the NadC/ModD family. Hexamer formed by 3 homodimers.

It carries out the reaction nicotinate beta-D-ribonucleotide + CO2 + diphosphate = quinolinate + 5-phospho-alpha-D-ribose 1-diphosphate + 2 H(+). Its pathway is cofactor biosynthesis; NAD(+) biosynthesis; nicotinate D-ribonucleotide from quinolinate: step 1/1. In terms of biological role, involved in the catabolism of quinolinic acid (QA). In Methanothermobacter thermautotrophicus (strain ATCC 29096 / DSM 1053 / JCM 10044 / NBRC 100330 / Delta H) (Methanobacterium thermoautotrophicum), this protein is Probable nicotinate-nucleotide pyrophosphorylase [carboxylating] (nadC).